A 577-amino-acid polypeptide reads, in one-letter code: General transcription factor IIF subunit 1 (577 aa).

The interval 1 to 36 is disordered; it reads MSSASKSTPSAASGSSTSAAAAAAASVASGSASSSA. 4 positions are modified to phosphoserine: Ser183, Ser246, Ser250, and Ser252. The tract at residues 236 to 508 is disordered; sequence KITDMDEWID…TSLPTSFSGG (273 aa). Residues 240 to 256 are compositionally biased toward acidic residues; it reads MDEWIDSEDESDSEDEE. The span at 257–271 shows a compositional bias: basic and acidic residues; the sequence is DKKKKEQEDSDDGKA. The span at 272-285 shows a compositional bias: basic residues; that stretch reads KGKGKKGADKKKKK. Positions 289 to 304 are enriched in acidic residues; sequence DDEAFEESDDGDEEGR. The segment covering 319-341 has biased composition (basic and acidic residues); the sequence is PEAKVDKDMKGVAEEDALRKLLT. Thr341 bears the Phosphothreonine mark. Phosphoserine occurs at positions 342, 352, and 355. Over residues 362 to 376 the composition is skewed to basic and acidic residues; that stretch reads GEKKKKDKGKDEVSK. Residues 392–406 are compositionally biased toward low complexity; sequence SNGSGDSSTDFSSDS. The span at 423–437 shows a compositional bias: basic and acidic residues; that stretch reads VVKDKDKEKEKEKES. Positions 438 to 456 are enriched in low complexity; it reads AASSKVIASSSNANKSRSA. A phosphoserine mark is found at Ser453 and Ser455. Thr457 carries the phosphothreonine modification. 2 stretches are compositionally biased toward polar residues: residues 471–489 and 496–506; these read SLPS…TSTP and EISTSLPTSFS. A phosphoserine mark is found at Ser482 and Ser484. The residue at position 488 (Thr488) is a Phosphothreonine.

Belongs to the TFIIF alpha subunit family. Heterodimer of an alpha and a beta subunit. Post-translationally, phosphorylated on Ser and other residues by TAF1 and casein kinase II-like kinases.

It localises to the nucleus. Functionally, TFIIF is a general transcription initiation factor that binds to RNA polymerase II and helps to recruit it to the initiation complex in collaboration with TFIIB. It promotes transcription elongation. The protein is General transcription factor IIF subunit 1 of Drosophila melanogaster (Fruit fly).